The following is a 110-amino-acid chain: Carboxysome shell protein CsoS1B (110 aa).

The BMC domain maps to 8 to 93 (ALGMIETRGL…VHSEVEIILP (86 aa)).

Belongs to the bacterial microcompartments protein family. CsoS1 subfamily. As to quaternary structure, homohexamer with a small central pore. Interacts with the N-terminus (residues 1-136) of RuBisCO (CbbL).

Its subcellular location is the carboxysome. Its function is as follows. One of shell proteins of the carboxysome, a polyhedral inclusion where RuBisCO (ribulose bisphosphate carboxylase, ccbL-ccbS) is sequestered. Assembles into hexamers which make sheets that form the facets of the polyhedral carboxysome. The shell probably limits the diffusion of CO(2) into and out of the carboxysome. There are estimated to be 540 CsoS1B proteins per carboxysome. Unlike beta-carboxysomes, alpha-carboxysomes (Cb) can form without cargo protein. CsoS2 is essential for Cb formation and is also capable of targeting foreign proteins to the Cb. The Cb shell assembles with the aid of CsoS2; CsoS1A, CsoS1B and CsoS1C form the majority of the shell while CsoS4A and CsoS4B form vertices. CsoS1D forms pseudohexamers that probably control metabolite flux into and out of the shell. The sequence is that of Carboxysome shell protein CsoS1B from Halothiobacillus neapolitanus (strain ATCC 23641 / c2) (Thiobacillus neapolitanus).